The following is a 143-amino-acid chain: Ninjurin-2 (143 aa).

The Extracellular segment spans residues 1–61 (MESDRETIHL…KSVLQQGPFA (61 aa)). The helix alpha1 stretch occupies residues 26 to 38 (NFYATKKSVAESM). Positions 39–58 (LDVALFMSNAMRLKSVLQQG) are helix alpha2. The helical transmembrane segment at 62–93 (EYYTTLVTLIIVSLLLQVVISLLLVFIAILNL) threads the bilayer. Topologically, residues 94 to 97 (NEVE) are cytoplasmic. The helical transmembrane segment at 98–127 (NQRHLNKLNNAATILVFITVVINIFITAFG) threads the bilayer. Residue Lys104 participates in cholesterol binding. Over 128–143 (AHHAASMAARTSSNPI) the chain is Extracellular.

The protein belongs to the ninjurin family. Homooligomer; in response to stimuli, homooligomerizes into filaments. In contrast to NINJ1, the filament is curved toward the intracellular space, preventing its circularization on a relatively flat membrane to mediate plasma membrane rupture: curvature is caused by cholesterol-binding at the cytoplasmic leaflet.

Its subcellular location is the cell membrane. Functionally, its role in unclear. In contrast to NINJ1 paralog, does not mediate plasma membrane rupture (cytolysis) downstream of necroptotic and pyroptotic programmed cell death. While it is able to oligomerize and form filaments, filaments are curved toward the intracellular space, preventing circularization to mediate plasma membrane rupture. May act as a homophilic transmembrane adhesion molecule involved in nerve regeneration. Promotes axonal growth. The chain is Ninjurin-2 (Ninj2) from Mus musculus (Mouse).